A 544-amino-acid chain; its full sequence is Chaperonin GroEL 1 (544 aa).

ATP-binding positions include 30-33 (TLGP), lysine 51, 87-91 (DGTTT), glycine 415, and aspartate 494.

It belongs to the chaperonin (HSP60) family. As to quaternary structure, forms a cylinder of 14 subunits composed of two heptameric rings stacked back-to-back. Interacts with the co-chaperonin GroES.

It localises to the cytoplasm. It carries out the reaction ATP + H2O + a folded polypeptide = ADP + phosphate + an unfolded polypeptide.. Its function is as follows. Together with its co-chaperonin GroES, plays an essential role in assisting protein folding. The GroEL-GroES system forms a nano-cage that allows encapsulation of the non-native substrate proteins and provides a physical environment optimized to promote and accelerate protein folding. The chain is Chaperonin GroEL 1 from Syntrophus aciditrophicus (strain SB).